The primary structure comprises 150 residues: Group IIC secretory phospholipase A2 (150 aa).

Positions 1–20 are cleaved as a signal peptide; that stretch reads MKGIAVFLVFIFCWTTSTLS. 8 disulfides stabilise this stretch: Cys-46/Cys-143, Cys-48/Cys-64, Cys-63/Cys-121, Cys-69/Cys-150, Cys-70/Cys-114, Cys-79/Cys-107, Cys-97/Cys-112, and Cys-99/Cys-105. Ca(2+) contacts are provided by Tyr-47, Gly-49, and Gly-51. His-67 is a catalytic residue. Asp-68 is a binding site for Ca(2+). Asn-92 is a glycosylation site (N-linked (GlcNAc...) asparagine). Asp-115 is a catalytic residue.

This sequence belongs to the phospholipase A2 family. Ca(2+) is required as a cofactor.

It is found in the secreted. The catalysed reaction is a 1,2-diacyl-sn-glycero-3-phosphocholine + H2O = a 1-acyl-sn-glycero-3-phosphocholine + a fatty acid + H(+). Its function is as follows. PA2 catalyzes the calcium-dependent hydrolysis of the 2-acyl groups in 3-sn-phosphoglycerides. The chain is Group IIC secretory phospholipase A2 (Pla2g2c) from Rattus norvegicus (Rat).